A 250-amino-acid chain; its full sequence is Aliphatic sulfonates import ATP-binding protein SsuB 2 (250 aa).

One can recognise an ABC transporter domain in the interval 13–229 (VRLQGLTRSF…SYRDPLLGEY (217 aa)). 45–52 (GHSGSGKS) serves as a coordination point for ATP.

The protein belongs to the ABC transporter superfamily. Aliphatic sulfonates importer (TC 3.A.1.17.2) family. As to quaternary structure, the complex is composed of two ATP-binding proteins (SsuB), two transmembrane proteins (SsuC) and a solute-binding protein (SsuA).

Its subcellular location is the cell membrane. It carries out the reaction ATP + H2O + aliphatic sulfonate-[sulfonate-binding protein]Side 1 = ADP + phosphate + aliphatic sulfonateSide 2 + [sulfonate-binding protein]Side 1.. Its function is as follows. Part of the ABC transporter complex SsuABC involved in aliphatic sulfonates import. Responsible for energy coupling to the transport system. This Streptomyces avermitilis (strain ATCC 31267 / DSM 46492 / JCM 5070 / NBRC 14893 / NCIMB 12804 / NRRL 8165 / MA-4680) protein is Aliphatic sulfonates import ATP-binding protein SsuB 2.